The following is a 155-amino-acid chain: Endoribonuclease YbeY (155 aa).

Residues His117, His121, and His127 each contribute to the Zn(2+) site.

This sequence belongs to the endoribonuclease YbeY family. It depends on Zn(2+) as a cofactor.

It is found in the cytoplasm. Its function is as follows. Single strand-specific metallo-endoribonuclease involved in late-stage 70S ribosome quality control and in maturation of the 3' terminus of the 16S rRNA. The chain is Endoribonuclease YbeY from Dichelobacter nodosus (strain VCS1703A).